The following is a 226-amino-acid chain: Urease accessory protein UreG (226 aa).

Residues M1–P26 are disordered. Position 33–40 (G33–T40) interacts with GTP.

The protein belongs to the SIMIBI class G3E GTPase family. UreG subfamily. As to quaternary structure, homodimer. UreD, UreF and UreG form a complex that acts as a GTP-hydrolysis-dependent molecular chaperone, activating the urease apoprotein by helping to assemble the nickel containing metallocenter of UreC. The UreE protein probably delivers the nickel.

It is found in the cytoplasm. In terms of biological role, facilitates the functional incorporation of the urease nickel metallocenter. This process requires GTP hydrolysis, probably effectuated by UreG. This is Urease accessory protein UreG from Mycolicibacterium vanbaalenii (strain DSM 7251 / JCM 13017 / BCRC 16820 / KCTC 9966 / NRRL B-24157 / PYR-1) (Mycobacterium vanbaalenii).